The primary structure comprises 501 residues: UDP-N-acetylmuramoyl-L-alanyl-D-glutamate--2,6-diaminopimelate ligase (501 aa).

UDP-N-acetyl-alpha-D-muramoyl-L-alanyl-D-glutamate contacts are provided by residues leucine 26, serine 28, and 43 to 45; that span reads HQC. Position 123–129 (123–129) interacts with ATP; the sequence is GTNGKTT. UDP-N-acetyl-alpha-D-muramoyl-L-alanyl-D-glutamate is bound by residues asparagine 164, 165–166, serine 192, glutamine 198, and arginine 200; that span reads TT. The residue at position 232 (lysine 232) is an N6-carboxylysine. Meso-2,6-diaminopimelate is bound by residues arginine 398, 422-425, glycine 473, and glutamate 477; that span reads DNPR. The short motif at 422–425 is the Meso-diaminopimelate recognition motif element; the sequence is DNPR.

This sequence belongs to the MurCDEF family. MurE subfamily. It depends on Mg(2+) as a cofactor. In terms of processing, carboxylation is probably crucial for Mg(2+) binding and, consequently, for the gamma-phosphate positioning of ATP.

It is found in the cytoplasm. It catalyses the reaction UDP-N-acetyl-alpha-D-muramoyl-L-alanyl-D-glutamate + meso-2,6-diaminopimelate + ATP = UDP-N-acetyl-alpha-D-muramoyl-L-alanyl-gamma-D-glutamyl-meso-2,6-diaminopimelate + ADP + phosphate + H(+). It functions in the pathway cell wall biogenesis; peptidoglycan biosynthesis. Functionally, catalyzes the addition of meso-diaminopimelic acid to the nucleotide precursor UDP-N-acetylmuramoyl-L-alanyl-D-glutamate (UMAG) in the biosynthesis of bacterial cell-wall peptidoglycan. In Haemophilus ducreyi (strain 35000HP / ATCC 700724), this protein is UDP-N-acetylmuramoyl-L-alanyl-D-glutamate--2,6-diaminopimelate ligase.